The sequence spans 192 residues: Vascular endothelial growth factor A (192 aa).

A signal peptide spans 1-26 (MNFLLSWIHWGLAALLYFHNAKVLQA). Intrachain disulfides connect C52-C94, C83-C128, and C87-C130. An N-linked (GlcNAc...) asparagine glycan is attached at N101.

It belongs to the PDGF/VEGF growth factor family. As to quaternary structure, homodimer; disulfide-linked. Also found as heterodimer with PGF Interacts with FLT1/VEGFR1 and KDR/VEGFR2 receptors, heparan sulfate and heparin. In terms of tissue distribution, expressed by the venom gland, and probably other tissues.

It localises to the secreted. Growth factor active in angiogenesis, vasculogenesis and endothelial cell growth. Induces endothelial cell proliferation, promotes cell migration, inhibits apoptosis and induces permeabilization of blood vessels. This is Vascular endothelial growth factor A from Vipera ammodytes ammodytes (Western sand viper).